Reading from the N-terminus, the 295-residue chain is Phosphoserine phosphatase, chloroplastic (295 aa).

A chloroplast-targeting transit peptide spans 1–54 (MEALTTSRVVPVQVPCRKLSSLFANFSCLELRRYPCRGLVSIMNHPKLLRPVTA). Asp89 functions as the Nucleophile in the catalytic mechanism. Mg(2+) is bound by residues Asp89 and Asp91. Asp91 serves as the catalytic Proton donor. Residues Glu98, Arg134, 178-179 (SG), and Lys227 contribute to the substrate site. Asp248 is a Mg(2+) binding site.

Belongs to the HAD-like hydrolase superfamily. SerB family. Requires Mg(2+) as cofactor. As to expression, ubiquitous. Mainly expressed in shoot and root meristems, vasculature, pollen, anthers, carpels and seeds.

The protein localises to the plastid. It is found in the chloroplast. It carries out the reaction O-phospho-L-serine + H2O = L-serine + phosphate. The catalysed reaction is O-phospho-D-serine + H2O = D-serine + phosphate. It functions in the pathway amino-acid biosynthesis; L-serine biosynthesis; L-serine from 3-phospho-D-glycerate: step 3/3. Approximately 60% inhibition of PSP activity is observed in presence of 10 mM serine. Catalyzes the last step in the plastidial phosphorylated pathway of serine biosynthesis (PPSB). The reaction mechanism proceeds via the formation of a phosphoryl-enzyme intermediates. Required for embryo, pollen and root development. May be required preferentially for serine biosynthesis in non-photosynthetic tissues. The chain is Phosphoserine phosphatase, chloroplastic (PSP) from Arabidopsis thaliana (Mouse-ear cress).